The chain runs to 400 residues: Acetate kinase (400 aa).

Position 10 (N10) interacts with Mg(2+). K17 contributes to the ATP binding site. R91 is a binding site for substrate. The active-site Proton donor/acceptor is the D148. Residues 208–212 (HLGNG), 283–285 (DCR), and 331–335 (GIGEN) contribute to the ATP site. E385 is a binding site for Mg(2+).

This sequence belongs to the acetokinase family. In terms of assembly, homodimer. Mg(2+) is required as a cofactor. Requires Mn(2+) as cofactor.

It is found in the cytoplasm. The enzyme catalyses acetate + ATP = acetyl phosphate + ADP. It functions in the pathway metabolic intermediate biosynthesis; acetyl-CoA biosynthesis; acetyl-CoA from acetate: step 1/2. In terms of biological role, catalyzes the formation of acetyl phosphate from acetate and ATP. Can also catalyze the reverse reaction. This Shewanella putrefaciens (strain CN-32 / ATCC BAA-453) protein is Acetate kinase.